The chain runs to 139 residues: MLFIKPADLREIVTFPLFSDLVQCGFPSPAADYVEQRIDLNQLLIQHPSATYFVKASGDSMIDGGISDGDLLIVDSAITASHGDIVIAAVDGEFTVKKLQLRPTVQLIPMNSAYSPITISSEDTLDVFGVVIHVVKAMR.

Catalysis depends on for autocatalytic cleavage activity residues Ser-60 and Lys-97.

It belongs to the peptidase S24 family.

In terms of biological role, involved in UV protection and mutation. Essential for induced (or SOS) mutagenesis. May modify the DNA replication machinery to allow bypass synthesis across a damaged template. This Escherichia coli O157:H7 protein is Protein UmuD (umuD).